A 121-amino-acid polypeptide reads, in one-letter code: Small ribosomal subunit protein bS6 (121 aa).

Belongs to the bacterial ribosomal protein bS6 family.

Binds together with bS18 to 16S ribosomal RNA. The protein is Small ribosomal subunit protein bS6 of Rickettsia felis (strain ATCC VR-1525 / URRWXCal2) (Rickettsia azadi).